The following is a 153-amino-acid chain: 6,7-dimethyl-8-ribityllumazine synthase (153 aa).

5-amino-6-(D-ribitylamino)uracil is bound by residues Phe-22, 56–58, and 80–82; these read AFE and AVI. 85-86 serves as a coordination point for (2S)-2-hydroxy-3-oxobutyl phosphate; that stretch reads AT. The Proton donor role is filled by His-88. Residue Phe-113 coordinates 5-amino-6-(D-ribitylamino)uracil. Arg-127 is a (2S)-2-hydroxy-3-oxobutyl phosphate binding site.

This sequence belongs to the DMRL synthase family.

It catalyses the reaction (2S)-2-hydroxy-3-oxobutyl phosphate + 5-amino-6-(D-ribitylamino)uracil = 6,7-dimethyl-8-(1-D-ribityl)lumazine + phosphate + 2 H2O + H(+). The protein operates within cofactor biosynthesis; riboflavin biosynthesis; riboflavin from 2-hydroxy-3-oxobutyl phosphate and 5-amino-6-(D-ribitylamino)uracil: step 1/2. Catalyzes the formation of 6,7-dimethyl-8-ribityllumazine by condensation of 5-amino-6-(D-ribitylamino)uracil with 3,4-dihydroxy-2-butanone 4-phosphate. This is the penultimate step in the biosynthesis of riboflavin. The protein is 6,7-dimethyl-8-ribityllumazine synthase of Clostridium tetani (strain Massachusetts / E88).